A 159-amino-acid polypeptide reads, in one-letter code: MRIHEVTPKEGSTKRRRRVGRGISAGQGASCGFGMRGQKSRSGTGTKAGFEGGQMPLYRRIPKLKHFPLVNPKHYTIINVGKLESLEPNTEVTLESLMEQGIITTNDGPLKVLGDGTLTKALTVKAAAFSKSAQEKIAATGGSWEVLSRKSQQDTEKDE.

The segment covering 1–13 (MRIHEVTPKEGST) has biased composition (basic and acidic residues). The disordered stretch occupies residues 1 to 51 (MRIHEVTPKEGSTKRRRRVGRGISAGQGASCGFGMRGQKSRSGTGTKAGFE). The span at 23–35 (ISAGQGASCGFGM) shows a compositional bias: gly residues.

The protein belongs to the universal ribosomal protein uL15 family. Part of the 50S ribosomal subunit.

Functionally, binds to the 23S rRNA. The polypeptide is Large ribosomal subunit protein uL15 (Rippkaea orientalis (strain PCC 8801 / RF-1) (Cyanothece sp. (strain PCC 8801))).